The sequence spans 98 residues: NADH-ubiquinone oxidoreductase chain 4L (98 aa).

Transmembrane regions (helical) follow at residues 1–21 (MSLVHINILMAFTMSLTGLLM), 29–49 (ALLCLEGMVLSLFILATLTIL), and 61–81 (IILLVFAACEAAIGLALLIMI).

Belongs to the complex I subunit 4L family. As to quaternary structure, core subunit of respiratory chain NADH dehydrogenase (Complex I) which is composed of 45 different subunits.

It is found in the mitochondrion inner membrane. The catalysed reaction is a ubiquinone + NADH + 5 H(+)(in) = a ubiquinol + NAD(+) + 4 H(+)(out). Functionally, core subunit of the mitochondrial membrane respiratory chain NADH dehydrogenase (Complex I) which catalyzes electron transfer from NADH through the respiratory chain, using ubiquinone as an electron acceptor. Part of the enzyme membrane arm which is embedded in the lipid bilayer and involved in proton translocation. The protein is NADH-ubiquinone oxidoreductase chain 4L (MT-ND4L) of Monodon monoceros (Narwhal).